The sequence spans 119 residues: Large ribosomal subunit protein bL19 (119 aa).

It belongs to the bacterial ribosomal protein bL19 family.

In terms of biological role, this protein is located at the 30S-50S ribosomal subunit interface and may play a role in the structure and function of the aminoacyl-tRNA binding site. This chain is Large ribosomal subunit protein bL19, found in Borreliella afzelii (strain PKo) (Borrelia afzelii).